We begin with the raw amino-acid sequence, 171 residues long: UPF0763 protein HPSH_03535 (171 aa).

It belongs to the UPF0763 family.

In Helicobacter pylori (strain Shi470), this protein is UPF0763 protein HPSH_03535.